Reading from the N-terminus, the 132-residue chain is MSLGWLEDVAWNKEGLIPAIAQEDRTGQVLMLAWMNREALETTVQSGYAVYWSRSRKRLWRKGEQSGHEQIIKAIHLDCDSDAVLLLVEQKGGMACHTGRHRCFFKRLEKGNWASVEPVLKSPDSIYNNSDE.

A Mg(2+)-binding site is contributed by aspartate 78. Residue cysteine 79 coordinates Zn(2+). Residues aspartate 80 and aspartate 82 each contribute to the Mg(2+) site. Zn(2+) contacts are provided by cysteine 96 and cysteine 103.

This sequence belongs to the PRA-CH family. Homodimer. Mg(2+) is required as a cofactor. The cofactor is Zn(2+).

Its subcellular location is the cytoplasm. It carries out the reaction 1-(5-phospho-beta-D-ribosyl)-5'-AMP + H2O = 1-(5-phospho-beta-D-ribosyl)-5-[(5-phospho-beta-D-ribosylamino)methylideneamino]imidazole-4-carboxamide. It participates in amino-acid biosynthesis; L-histidine biosynthesis; L-histidine from 5-phospho-alpha-D-ribose 1-diphosphate: step 3/9. Catalyzes the hydrolysis of the adenine ring of phosphoribosyl-AMP. The chain is Phosphoribosyl-AMP cyclohydrolase from Nitrosococcus oceani (strain ATCC 19707 / BCRC 17464 / JCM 30415 / NCIMB 11848 / C-107).